An 86-amino-acid chain; its full sequence is Putative membrane protein insertion efficiency factor (86 aa).

The protein belongs to the UPF0161 family.

Its subcellular location is the cell inner membrane. In terms of biological role, could be involved in insertion of integral membrane proteins into the membrane. In Oleidesulfovibrio alaskensis (strain ATCC BAA-1058 / DSM 17464 / G20) (Desulfovibrio alaskensis), this protein is Putative membrane protein insertion efficiency factor.